A 194-amino-acid chain; its full sequence is MKNIILASASERRQELLKRILEDFQIIVSDFDESSIPFKDNIPSYVMNLAEGKARSVGKKIMDQDSNLVIGCDTLVAFNNKVLGKPKDKKDAFEMLQALSGNEHEVYSGLAILDVKSNKIITDFVCTKVKFSKLTSLQIEKYINTGDPMDKAGAYGIQGKAGVFVENINGCYYNVVGLPLNKLNSMLMEMGVNL.

Residue Asp73 is the Proton acceptor of the active site.

It belongs to the Maf family. YhdE subfamily. It depends on a divalent metal cation as a cofactor.

Its subcellular location is the cytoplasm. It carries out the reaction dTTP + H2O = dTMP + diphosphate + H(+). It catalyses the reaction UTP + H2O = UMP + diphosphate + H(+). In terms of biological role, nucleoside triphosphate pyrophosphatase that hydrolyzes dTTP and UTP. May have a dual role in cell division arrest and in preventing the incorporation of modified nucleotides into cellular nucleic acids. This is dTTP/UTP pyrophosphatase from Clostridium botulinum (strain Loch Maree / Type A3).